The sequence spans 431 residues: Tol-Pal system protein TolB (431 aa).

An N-terminal signal peptide occupies residues 1–26 (MSLMTKLGFRALVASCLITAGSAANA). Residues 406-431 (DGSAPPQILSVQGGSVREPSWGPFMQ) are disordered.

This sequence belongs to the TolB family. As to quaternary structure, the Tol-Pal system is composed of five core proteins: the inner membrane proteins TolA, TolQ and TolR, the periplasmic protein TolB and the outer membrane protein Pal. They form a network linking the inner and outer membranes and the peptidoglycan layer.

It localises to the periplasm. Its function is as follows. Part of the Tol-Pal system, which plays a role in outer membrane invagination during cell division and is important for maintaining outer membrane integrity. The polypeptide is Tol-Pal system protein TolB (Burkholderia orbicola (strain AU 1054)).